The chain runs to 159 residues: Protein-export protein SecB (159 aa).

Belongs to the SecB family. In terms of assembly, homotetramer, a dimer of dimers. One homotetramer interacts with 1 SecA dimer.

It is found in the cytoplasm. Its function is as follows. One of the proteins required for the normal export of preproteins out of the cell cytoplasm. It is a molecular chaperone that binds to a subset of precursor proteins, maintaining them in a translocation-competent state. It also specifically binds to its receptor SecA. This is Protein-export protein SecB from Burkholderia vietnamiensis (strain G4 / LMG 22486) (Burkholderia cepacia (strain R1808)).